Reading from the N-terminus, the 355-residue chain is Chemerin-like receptor 2 (355 aa).

Residues 1-41 (MEDLEETLFEEFENYSYALDYYSLESDLEEKVQLGVVHWVS) are Extracellular-facing. An N-linked (GlcNAc...) asparagine glycan is attached at Asn-14. A helical transmembrane segment spans residues 42 to 62 (LVLYCLSFVLGIPGNAIVIWF). At 63–73 (TGFKWKRTVST) the chain is on the cytoplasmic side. The helical transmembrane segment at 74 to 94 (LWFLNLAIADFIFLLFLPLYI) threads the bilayer. The Extracellular segment spans residues 95-112 (SYVVMNFHWPFGIWLCKA). A disulfide bridge connects residues Cys-110 and Cys-187. The helical transmembrane segment at 113 to 133 (NSFTAQLNMFASVFFLTVISL) threads the bilayer. The Cytoplasmic segment spans residues 134–154 (DHYIHLIHPVLSHRHRTLKNS). Residues 155-175 (LIVIIFIWLLASLIGGPALYF) form a helical membrane-spanning segment. The Extracellular segment spans residues 176–210 (RDTVEFNNHTLCYNNFQKHDPDLTVIRHHVLTWVK). The chain crosses the membrane as a helical span at residues 211–231 (YIVGYLFPLLTMSICYLCLIL). Over 232-247 (KVKKRSILISSRHFWT) the chain is Cytoplasmic. The chain crosses the membrane as a helical span at residues 248-268 (ILAVVVAFVVCWTPYHLFSIW). Residues 269–286 (ELTIHHNSYSHHVMQAGI) lie on the Extracellular side of the membrane. A helical transmembrane segment spans residues 287–307 (PLSTGLAFLNSCLNPILYVLI). Residues 308–355 (SKKFQARFRSSVAEILKYTLWEVSCSGTVSEQLRNSETKNLCLLETAQ) lie on the Cytoplasmic side of the membrane.

Belongs to the chemokine-like receptor (CMKLR) family.

The protein resides in the cell membrane. In terms of biological role, receptor for chemoattractant adipokine chemerin/RARRES2 suggesting a role for this receptor in the regulation of inflammation and energy homesotasis. Signals mainly via beta-arrestin pathway. Binding of RARRES2 activates weakly G proteins, calcium mobilization and MAPK1/MAPK3 (ERK1/2) phosphorylation too. Acts also as a receptor for TAFA1, mediates its effects on neuronal stem-cell proliferation and differentiation via the activation of ROCK/ERK and ROCK/STAT3 signaling pathway. The polypeptide is Chemerin-like receptor 2 (CMKLR2) (Macaca fascicularis (Crab-eating macaque)).